A 380-amino-acid chain; its full sequence is Kappa-type opioid receptor (380 aa).

The Extracellular segment spans residues 1–57 (MGRRRQGPAQPASELPARNACLLPNGSAWLPGWAEPDGNGSAGPQDEQLEPAHISPA). 2 N-linked (GlcNAc...) asparagine glycosylation sites follow: Asn-25 and Asn-39. A helical membrane pass occupies residues 58 to 85 (IPVIITAVYSVVFVVGLVGNSLVMFVII). Residues 86–95 (RYTKMKTATN) lie on the Cytoplasmic side of the membrane. Residues 96-119 (IYIFNLALADALVTTTMPFQSTVY) form a helical membrane-spanning segment. Over 120–132 (LMNSWPFGDVLCK) the chain is Extracellular. Cysteines 131 and 210 form a disulfide. A helical membrane pass occupies residues 133–154 (IVISIDYYNMFTSIFTLTMMSV). Residues 155-173 (DRYIAVCHPVKALDFRTPL) lie on the Cytoplasmic side of the membrane. The helical transmembrane segment at 174–196 (KAKIINICIWLLSSSVGISAIIL) threads the bilayer. Residues 197–222 (GGTKVREDVDIIECSLQFPDDDYSWW) lie on the Extracellular side of the membrane. Residues 223 to 247 (DLFMKICVFVFAFVIPVLIIIVCYT) form a helical membrane-spanning segment. The Cytoplasmic segment spans residues 248 to 274 (LMILRLKSVRLLSGSREKDRNLRRITR). The chain crosses the membrane as a helical span at residues 275–296 (LVLVVVAVFIICWTPIHIFILV). Residues 297–311 (EALGSTSHSTAALSS) are Extracellular-facing. The chain crosses the membrane as a helical span at residues 312–333 (YYFCIALGYTNSSLNPILYAFL). The Cytoplasmic portion of the chain corresponds to 334–380 (DENFKRCFRDFCFPIKMRMERQSTSRVRNTVQDPAYMRNVDGVNKPV). Cys-345 carries S-palmitoyl cysteine lipidation.

Belongs to the G-protein coupled receptor 1 family. As to quaternary structure, interacts with NHERF1. Interacts with GABARAPL1.

Its subcellular location is the cell membrane. G-protein coupled opioid receptor that functions as a receptor for endogenous alpha-neoendorphins and dynorphins, but has low affinity for beta-endorphins. Also functions as a receptor for various synthetic opioids and for the psychoactive diterpene salvinorin A. Ligand binding causes a conformation change that triggers signaling via guanine nucleotide-binding proteins (G proteins) and modulates the activity of down-stream effectors, such as adenylate cyclase. Signaling leads to the inhibition of adenylate cyclase activity. Inhibits neurotransmitter release by reducing calcium ion currents and increasing potassium ion conductance. Plays a role in the perception of pain. Plays a role in mediating reduced physical activity upon treatment with synthetic opioids. Plays a role in the regulation of salivation in response to synthetic opioids. May play a role in arousal and regulation of autonomic and neuroendocrine functions. This Cavia porcellus (Guinea pig) protein is Kappa-type opioid receptor (OPRK1).